A 297-amino-acid chain; its full sequence is tRNA pseudouridine synthase B (297 aa).

The active-site Nucleophile is the aspartate 39.

Belongs to the pseudouridine synthase TruB family. Type 1 subfamily.

The enzyme catalyses uridine(55) in tRNA = pseudouridine(55) in tRNA. Its function is as follows. Responsible for synthesis of pseudouridine from uracil-55 in the psi GC loop of transfer RNAs. This Lactobacillus johnsonii (strain CNCM I-12250 / La1 / NCC 533) protein is tRNA pseudouridine synthase B.